The primary structure comprises 127 residues: Major sperm protein isoform beta (127 aa).

Ala-2 is subject to N-acetylalanine. The MSP domain occupies 9–126; it reads DINTQPGSKI…RRKNLPIEYN (118 aa).

Forms filaments 10 nm wide, with a characteristic substructure repeating axially at 9 nm. Sperm.

It localises to the cell projection. The protein localises to the pseudopodium. It is found in the cytoplasm. Its subcellular location is the cytoskeleton. Functionally, central component in molecular interactions underlying sperm crawling. Forms an extensive filament system that extends from sperm villipoda, along the leading edge of the pseudopod. This chain is Major sperm protein isoform beta, found in Ascaris suum (Pig roundworm).